Here is a 473-residue protein sequence, read N- to C-terminus: Photosystem II CP43 reaction center protein (473 aa).

Residues 1–14 (MKTLYSLRRFYPVE) constitute a propeptide that is removed on maturation. Thr-15 is subject to N-acetylthreonine. Residue Thr-15 is modified to Phosphothreonine. Transmembrane regions (helical) follow at residues 69–93 (LFEVAHFVPEKPMYEQGLILLPHLA), 134–155 (LLGPETLEESFPFFGYVWKDRN), 178–200 (KALYFGGVYDTWAPGGGDVRKIT), 255–275 (KPFAWARRAFVWSGEAYLSYS), and 291–312 (WFNNTAYPSEFYGPTGPEASQA). Residue Glu-367 coordinates [CaMn4O5] cluster. Residues 447–471 (RARAAAAGFEKGIDRDLEPVLSMTP) form a helical membrane-spanning segment.

Belongs to the PsbB/PsbC family. PsbC subfamily. PSII is composed of 1 copy each of membrane proteins PsbA, PsbB, PsbC, PsbD, PsbE, PsbF, PsbH, PsbI, PsbJ, PsbK, PsbL, PsbM, PsbT, PsbX, PsbY, PsbZ, Psb30/Ycf12, at least 3 peripheral proteins of the oxygen-evolving complex and a large number of cofactors. It forms dimeric complexes. It depends on Binds multiple chlorophylls and provides some of the ligands for the Ca-4Mn-5O cluster of the oxygen-evolving complex. It may also provide a ligand for a Cl- that is required for oxygen evolution. PSII binds additional chlorophylls, carotenoids and specific lipids. as a cofactor.

The protein resides in the plastid. Its subcellular location is the chloroplast thylakoid membrane. Its function is as follows. One of the components of the core complex of photosystem II (PSII). It binds chlorophyll and helps catalyze the primary light-induced photochemical processes of PSII. PSII is a light-driven water:plastoquinone oxidoreductase, using light energy to abstract electrons from H(2)O, generating O(2) and a proton gradient subsequently used for ATP formation. This chain is Photosystem II CP43 reaction center protein, found in Phalaenopsis aphrodite subsp. formosana (Moth orchid).